Here is a 704-residue protein sequence, read N- to C-terminus: Elongation factor G (704 aa).

A tr-type G domain is found at 8 to 291 (DKVRNIGIMA…AVVEYLASPV (284 aa)). GTP-binding positions include 17–24 (AHIDAGKT), 90–94 (DTPGH), and 144–147 (NKMD).

Belongs to the TRAFAC class translation factor GTPase superfamily. Classic translation factor GTPase family. EF-G/EF-2 subfamily.

The protein localises to the cytoplasm. Catalyzes the GTP-dependent ribosomal translocation step during translation elongation. During this step, the ribosome changes from the pre-translocational (PRE) to the post-translocational (POST) state as the newly formed A-site-bound peptidyl-tRNA and P-site-bound deacylated tRNA move to the P and E sites, respectively. Catalyzes the coordinated movement of the two tRNA molecules, the mRNA and conformational changes in the ribosome. In Chlorobium phaeobacteroides (strain DSM 266 / SMG 266 / 2430), this protein is Elongation factor G.